The primary structure comprises 31 residues: Cytochrome b6-f complex subunit 6 (31 aa).

The chain crosses the membrane as a helical span at residues 4 to 24 (LTSYFGFLLAALTITFVLFIG).

The protein belongs to the PetL family. The 4 large subunits of the cytochrome b6-f complex are cytochrome b6, subunit IV (17 kDa polypeptide, PetD), cytochrome f and the Rieske protein, while the 4 small subunits are PetG, PetL, PetM and PetN. The complex functions as a dimer.

The protein localises to the plastid. The protein resides in the chloroplast thylakoid membrane. Component of the cytochrome b6-f complex, which mediates electron transfer between photosystem II (PSII) and photosystem I (PSI), cyclic electron flow around PSI, and state transitions. PetL is important for photoautotrophic growth as well as for electron transfer efficiency and stability of the cytochrome b6-f complex. This is Cytochrome b6-f complex subunit 6 from Oxybasis rubra (Red goosefoot).